The sequence spans 79 residues: Acyl carrier protein (79 aa).

The 77-residue stretch at 1–77 (MNNVEKKIKK…KSIDYINNKN (77 aa)) folds into the Carrier domain. Ser-37 carries the O-(pantetheine 4'-phosphoryl)serine modification.

This sequence belongs to the acyl carrier protein (ACP) family. Post-translationally, 4'-phosphopantetheine is transferred from CoA to a specific serine of apo-ACP by AcpS. This modification is essential for activity because fatty acids are bound in thioester linkage to the sulfhydryl of the prosthetic group.

Its subcellular location is the cytoplasm. It participates in lipid metabolism; fatty acid biosynthesis. Its function is as follows. Carrier of the growing fatty acid chain in fatty acid biosynthesis. The sequence is that of Acyl carrier protein from Buchnera aphidicola subsp. Schizaphis graminum (strain Sg).